Reading from the N-terminus, the 381-residue chain is Sulfite reductase, dissimilatory-type subunit beta (381 aa).

Residues C151, C188, C189, C193, C231, C258, C261, and C264 each contribute to the [4Fe-4S] cluster site. Position 193 (C193) interacts with siroheme. The 28-residue stretch at 249 to 276 (NTIAIKNERCMYCGNCYTMCPALPISDG) folds into the 4Fe-4S ferredoxin-type domain.

Heterohexamer of two alpha, two beta and two gamma subunits. The cofactor is [4Fe-4S] cluster. Siroheme is required as a cofactor.

The catalysed reaction is [DsrC protein]-trisulfide + NAD(+) + 3 H2O = [DsrC protein]-dithiol + sulfite + NADH + 3 H(+). In terms of biological role, catalyzes the reduction of sulfite to sulfide. This is the terminal oxidation reaction in sulfate respiration, a process catalyzed by the sulfate-reducing bacteria. The polypeptide is Sulfite reductase, dissimilatory-type subunit beta (dsvB) (Nitratidesulfovibrio vulgaris (strain ATCC 29579 / DSM 644 / CCUG 34227 / NCIMB 8303 / VKM B-1760 / Hildenborough) (Desulfovibrio vulgaris)).